Here is a 140-residue protein sequence, read N- to C-terminus: GSDLVSGFWGKVDAHKIGGEALARLLVVYPWTQRYFTTFGNLGSADAICHNAKVLAHGEKVLAAIGEGLKHPENLKAHYAKLSEYHSNKLHVDPANFRLLGNVFITVLARHFQHEFTPELQHALEAHFCAVGDALAKAYH.

Residues 1–140 (GSDLVSGFWG…VGDALAKAYH (140 aa)) enclose the Globin domain. The heme b site is built by histidine 57 and histidine 86.

The protein belongs to the globin family. Heterotetramer of two alpha chains and two beta chains. Red blood cells.

Involved in oxygen transport from the lung to the various peripheral tissues. This is Hemoglobin subunit beta (HBB) from Pelophylax lessonae (Pool frog).